The chain runs to 112 residues: Large ribosomal subunit protein eL36y (112 aa).

The segment covering Lys-79–Arg-88 has biased composition (basic residues). Positions Lys-79 to Lys-112 are disordered. Over residues Ser-102 to Lys-112 the composition is skewed to gly residues.

This sequence belongs to the eukaryotic ribosomal protein eL36 family.

The chain is Large ribosomal subunit protein eL36y (RPL36B) from Arabidopsis thaliana (Mouse-ear cress).